Consider the following 20-residue polypeptide: FIGAALGALTAIPSIIKLFK.

K20 carries the post-translational modification Lysine amide.

Belongs to the non-disulfide-bridged peptide (NDBP) superfamily. Medium-length antimicrobial peptide (group 3) family. Ponericin-W subfamily. As to expression, expressed by the venom gland.

It localises to the secreted. The protein resides in the target cell membrane. In terms of biological role, has activity against Gram-positive bacteria. Has insecticidal and hemolytic activities. May act by disrupting the integrity of the bacterial cell membrane. This Neoponera inversa (Ant) protein is U1-poneritoxin-Ni1a.